Reading from the N-terminus, the 111-residue chain is Large ribosomal subunit protein eL30 (111 aa).

Belongs to the eukaryotic ribosomal protein eL30 family.

This Oryza sativa subsp. japonica (Rice) protein is Large ribosomal subunit protein eL30 (RPL30).